The primary structure comprises 566 residues: CTP synthase (566 aa).

Residues methionine 1–leucine 265 form an amidoligase domain region. A CTP-binding site is contributed by serine 13. Residue serine 13 participates in UTP binding. Residues serine 14–isoleucine 19 and aspartate 71 each bind ATP. Mg(2+) is bound by residues aspartate 71 and glutamate 139. CTP is bound by residues aspartate 146–glutamate 148, lysine 186–glutamine 191, and lysine 222. Residues lysine 186–glutamine 191 and lysine 222 each bind UTP. The Glutamine amidotransferase type-1 domain maps to glutamate 290–lysine 543. Residue glycine 351 coordinates L-glutamine. Cysteine 378 functions as the Nucleophile; for glutamine hydrolysis in the catalytic mechanism. L-glutamine-binding positions include leucine 379–glutamine 382, glutamate 402, and arginine 469. Catalysis depends on residues histidine 516 and glutamate 518. The disordered stretch occupies residues proline 545–glutamine 566.

The protein belongs to the CTP synthase family. In terms of assembly, homotetramer.

It carries out the reaction UTP + L-glutamine + ATP + H2O = CTP + L-glutamate + ADP + phosphate + 2 H(+). The catalysed reaction is L-glutamine + H2O = L-glutamate + NH4(+). It catalyses the reaction UTP + NH4(+) + ATP = CTP + ADP + phosphate + 2 H(+). It functions in the pathway pyrimidine metabolism; CTP biosynthesis via de novo pathway; CTP from UDP: step 2/2. Allosterically activated by GTP, when glutamine is the substrate; GTP has no effect on the reaction when ammonia is the substrate. The allosteric effector GTP functions by stabilizing the protein conformation that binds the tetrahedral intermediate(s) formed during glutamine hydrolysis. Inhibited by the product CTP, via allosteric rather than competitive inhibition. In terms of biological role, catalyzes the ATP-dependent amination of UTP to CTP with either L-glutamine or ammonia as the source of nitrogen. Regulates intracellular CTP levels through interactions with the four ribonucleotide triphosphates. This chain is CTP synthase, found in Nitrosospira multiformis (strain ATCC 25196 / NCIMB 11849 / C 71).